A 337-amino-acid polypeptide reads, in one-letter code: tRNA N6-adenosine threonylcarbamoyltransferase (337 aa).

2 residues coordinate Fe cation: His110 and His114. Substrate-binding positions include 133–137, Asp166, Gly179, Asp183, and Asn276; that span reads MVSGG. Residue Asp302 coordinates Fe cation.

The protein belongs to the KAE1 / TsaD family. It depends on Fe(2+) as a cofactor.

The protein localises to the cytoplasm. It carries out the reaction L-threonylcarbamoyladenylate + adenosine(37) in tRNA = N(6)-L-threonylcarbamoyladenosine(37) in tRNA + AMP + H(+). In terms of biological role, required for the formation of a threonylcarbamoyl group on adenosine at position 37 (t(6)A37) in tRNAs that read codons beginning with adenine. Is involved in the transfer of the threonylcarbamoyl moiety of threonylcarbamoyl-AMP (TC-AMP) to the N6 group of A37, together with TsaE and TsaB. TsaD likely plays a direct catalytic role in this reaction. This is tRNA N6-adenosine threonylcarbamoyltransferase from Fervidobacterium nodosum (strain ATCC 35602 / DSM 5306 / Rt17-B1).